The following is a 371-amino-acid chain: Anhydro-N-acetylmuramic acid kinase (371 aa).

Residue 12–20 (GTVLDGNID) participates in ATP binding.

It belongs to the anhydro-N-acetylmuramic acid kinase family.

The catalysed reaction is 1,6-anhydro-N-acetyl-beta-muramate + ATP + H2O = N-acetyl-D-muramate 6-phosphate + ADP + H(+). Its pathway is amino-sugar metabolism; 1,6-anhydro-N-acetylmuramate degradation. It participates in cell wall biogenesis; peptidoglycan recycling. Functionally, catalyzes the specific phosphorylation of 1,6-anhydro-N-acetylmuramic acid (anhMurNAc) with the simultaneous cleavage of the 1,6-anhydro ring, generating MurNAc-6-P. Is required for the utilization of anhMurNAc either imported from the medium or derived from its own cell wall murein, and thus plays a role in cell wall recycling. The polypeptide is Anhydro-N-acetylmuramic acid kinase (Rhizobium rhizogenes (strain K84 / ATCC BAA-868) (Agrobacterium radiobacter)).